The following is a 268-amino-acid chain: Tryptophan synthase alpha chain (268 aa).

Residues Glu-49 and Asp-60 each act as proton acceptor in the active site.

It belongs to the TrpA family. Tetramer of two alpha and two beta chains.

The catalysed reaction is (1S,2R)-1-C-(indol-3-yl)glycerol 3-phosphate + L-serine = D-glyceraldehyde 3-phosphate + L-tryptophan + H2O. The protein operates within amino-acid biosynthesis; L-tryptophan biosynthesis; L-tryptophan from chorismate: step 5/5. The alpha subunit is responsible for the aldol cleavage of indoleglycerol phosphate to indole and glyceraldehyde 3-phosphate. The chain is Tryptophan synthase alpha chain from Escherichia coli O1:K1 / APEC.